Consider the following 292-residue polypeptide: 4-hydroxy-tetrahydrodipicolinate synthase (292 aa).

Thr-45 is a pyruvate binding site. Tyr-133 functions as the Proton donor/acceptor in the catalytic mechanism. Catalysis depends on Lys-162, which acts as the Schiff-base intermediate with substrate. Residue Ile-204 coordinates pyruvate.

This sequence belongs to the DapA family. As to quaternary structure, homotetramer; dimer of dimers.

It is found in the cytoplasm. It catalyses the reaction L-aspartate 4-semialdehyde + pyruvate = (2S,4S)-4-hydroxy-2,3,4,5-tetrahydrodipicolinate + H2O + H(+). Its pathway is amino-acid biosynthesis; L-lysine biosynthesis via DAP pathway; (S)-tetrahydrodipicolinate from L-aspartate: step 3/4. Its function is as follows. Catalyzes the condensation of (S)-aspartate-beta-semialdehyde [(S)-ASA] and pyruvate to 4-hydroxy-tetrahydrodipicolinate (HTPA). The chain is 4-hydroxy-tetrahydrodipicolinate synthase from Nitratidesulfovibrio vulgaris (strain ATCC 29579 / DSM 644 / CCUG 34227 / NCIMB 8303 / VKM B-1760 / Hildenborough) (Desulfovibrio vulgaris).